The following is a 211-amino-acid chain: MPTHEIRHPLVRHKIGLMRRAEISTKSFRELAQEVGALLTYEASKDFNLGTEVVQGWAGPVEVEKLKGKKVTVVPILRAGLGMLDGVLSLIPAAKVSVVGQVRNEETLEAKTYLEKLVGELDQRLALIIDPMLATGGSMISTIDLLKKAGCSEIRALVLVAAPEGIAAVEKAHPDVHIYTAAIDERLNEKGYILPGLGDAGDRIFGTKQKS.

5-phospho-alpha-D-ribose 1-diphosphate contacts are provided by residues Arg78, Arg103, and 130–138 (DPMLATGGS). Uracil contacts are provided by residues Ile193 and 198–200 (GDA). Residue Asp199 participates in 5-phospho-alpha-D-ribose 1-diphosphate binding.

It belongs to the UPRTase family. Mg(2+) is required as a cofactor.

The catalysed reaction is UMP + diphosphate = 5-phospho-alpha-D-ribose 1-diphosphate + uracil. Its pathway is pyrimidine metabolism; UMP biosynthesis via salvage pathway; UMP from uracil: step 1/1. Its activity is regulated as follows. Allosterically activated by GTP. Its function is as follows. Catalyzes the conversion of uracil and 5-phospho-alpha-D-ribose 1-diphosphate (PRPP) to UMP and diphosphate. The protein is Uracil phosphoribosyltransferase of Hahella chejuensis (strain KCTC 2396).